The primary structure comprises 311 residues: Transcriptional regulatory protein MoaR1 (311 aa).

Positions 15–117 (LNATTAGAVQ…SEPPGYRLLI (103 aa)) form a DNA-binding region, ompR/PhoB-type.

It belongs to the AfsR/DnrI/RedD regulatory family.

Functionally, acts as a positive transcriptional regulator of the molybdopterin biosynthesis moa1 locus, promoting the expression of the moaA1B1C1D1 genes. This chain is Transcriptional regulatory protein MoaR1 (moaR1), found in Mycobacterium bovis (strain BCG / Pasteur 1173P2).